We begin with the raw amino-acid sequence, 263 residues long: Probable septum site-determining protein MinC (263 aa).

Residues 107–159 form a disordered region; sequence LPPSGARERPLDIKDSAPRKPAEEPSPSAGEARPEPAKAEEKPAEPVSRPTKV. 2 stretches are compositionally biased toward basic and acidic residues: residues 112–129 and 138–150; these read ARER…KPAE and ARPE…EKPA.

The protein belongs to the MinC family. As to quaternary structure, interacts with MinD and FtsZ.

In terms of biological role, cell division inhibitor that blocks the formation of polar Z ring septums. Rapidly oscillates between the poles of the cell to destabilize FtsZ filaments that have formed before they mature into polar Z rings. Prevents FtsZ polymerization. The polypeptide is Probable septum site-determining protein MinC (Pseudomonas aeruginosa (strain LESB58)).